A 480-amino-acid polypeptide reads, in one-letter code: 2-phosphoxylose phosphatase 1 (480 aa).

At M1 to R6 the chain is on the cytoplasmic side. Residues F7–F27 form a helical; Signal-anchor for type II membrane protein membrane-spanning segment. At H28 to A480 the chain is on the lumenal side. H97 serves as the catalytic Nucleophile. N-linked (GlcNAc...) asparagine glycosylation is found at N194, N305, and N354. D379 (proton donor) is an active-site residue.

The protein belongs to the histidine acid phosphatase family. As to quaternary structure, interacts with B3GAT3; the interaction increases the 2-phosphoxylose phosphatase activity of PXYLP1 during completion of linkage region formation in a B3GAT3-mediated manner.

It localises to the golgi apparatus membrane. It catalyses the reaction 3-O-[beta-D-GlcA-(1-&gt;3)-beta-D-Gal-(1-&gt;3)-beta-D-Gal-(1-&gt;4)-beta-D-2-O-P-Xyl]-L-seryl-[protein] + H2O = 3-O-(beta-D-GlcA-(1-&gt;3)-beta-D-Gal-(1-&gt;3)-beta-D-Gal-(1-&gt;4)-beta-D-Xyl)-L-seryl-[protein] + phosphate. Its function is as follows. Responsible for the 2-O-dephosphorylation of xylose in the glycosaminoglycan-protein linkage region of proteoglycans thereby regulating the amount of mature glycosaminoglycan (GAG) chains. Sulfated glycosaminoglycans (GAGs), including heparan sulfate and chondroitin sulfate, are synthesized on the so-called common GAG-protein linkage region (GlcUAbeta1-3Galbeta1-3Galbeta1-4Xylbeta1-O-Ser) of core proteins, which is formed by the stepwise addition of monosaccharide residues by the respective specific glycosyltransferases. Xylose 2-O-dephosphorylation during completion of linkage region formation is a prerequisite for the initiation and efficient elongation of the repeating disaccharide region of GAG chains. The chain is 2-phosphoxylose phosphatase 1 from Mus musculus (Mouse).